Consider the following 420-residue polypeptide: Protein-lysine N-trimethyltransferase SMYD5 (420 aa).

Residues 29-358 (AEARFISSAK…AGEEICISYL (330 aa)) form the SET domain. Residues 104 to 142 (PEQCSIRKDLHQQCPRCQVTYCSAECRQAALEQYHQVLC) form an MYND-type zinc finger. Tyr-357 is an S-adenosyl-L-methionine binding site. A disordered region spans residues 392 to 420 (DDPDVTSDEEEEAEGETDDAELEDEMTDV).

It belongs to the class V-like SAM-binding methyltransferase superfamily.

Its subcellular location is the cytoplasm. The enzyme catalyses L-lysyl-[protein] + 3 S-adenosyl-L-methionine = N(6),N(6),N(6)-trimethyl-L-lysyl-[protein] + 3 S-adenosyl-L-homocysteine + 3 H(+). It carries out the reaction L-lysyl(20)-[histone H4] + 3 S-adenosyl-L-methionine = N(6),N(6),N(6)-trimethyl-L-lysyl(20)-[histone H4] + 3 S-adenosyl-L-homocysteine + 3 H(+). The catalysed reaction is L-lysyl(36)-[histone H3] + 3 S-adenosyl-L-methionine = N(6),N(6),N(6)-trimethyl-L-lysyl(36)-[histone H3] + 3 S-adenosyl-L-homocysteine + 3 H(+). Functionally, protein-lysine N-trimethyltransferase that specifically catalyzes trimethylation of 'Lys-22' of the RPL40/eL40 subunit of the 60S ribosome, thereby promoting translation elongation and protein synthesis. May also act as a histone methyltransferase in the context of histone octamers, but not on nucleosome substrates: trimethylates 'Lys-36' of histone H3 and 'Lys-20' of histone H4 to form H3K36me3 and H4K20me3, respectively. The histone methyltransferase activity, which is independent of its SET domain, is however unsure in vivo. This is Protein-lysine N-trimethyltransferase SMYD5 (SMYD5) from Gallus gallus (Chicken).